The following is a 237-amino-acid chain: Cyclic-di-GMP-binding biofilm dispersal mediator protein (237 aa).

10–34 (LILGGSRGIGAAIVRRFVTDGANVR) contributes to the NAD(+) binding site. Serine 132 provides a ligand contact to substrate. Tyrosine 146 acts as the Proton acceptor in catalysis.

Belongs to the short-chain dehydrogenases/reductases (SDR) family.

Increases biofilm dispersal. Acts by binding directly to the signaling molecule cyclic-di-GMP, which decreases the intracellular concentration of cyclic-di-GMP and leads to biofilm dispersal. Also controls other biofilm-related phenotypes such as cell motility, cell size, cell aggregation and production of extracellular DNA and extracellular polysaccharides (EPS). Does not act as a phosphodiesterase. This Escherichia coli (strain K12) protein is Cyclic-di-GMP-binding biofilm dispersal mediator protein (bdcA).